The primary structure comprises 456 residues: Exodeoxyribonuclease 7 large subunit (456 aa).

It belongs to the XseA family. In terms of assembly, heterooligomer composed of large and small subunits.

It is found in the cytoplasm. It catalyses the reaction Exonucleolytic cleavage in either 5'- to 3'- or 3'- to 5'-direction to yield nucleoside 5'-phosphates.. In terms of biological role, bidirectionally degrades single-stranded DNA into large acid-insoluble oligonucleotides, which are then degraded further into small acid-soluble oligonucleotides. The sequence is that of Exodeoxyribonuclease 7 large subunit from Escherichia coli O157:H7.